The chain runs to 369 residues: UDP-N-acetylglucosamine--N-acetylmuramyl-(pentapeptide) pyrophosphoryl-undecaprenol N-acetylglucosamine transferase (369 aa).

Residues 16 to 18, N130, R171, S203, I253, and Q298 contribute to the UDP-N-acetyl-alpha-D-glucosamine site; that span reads TGG.

It belongs to the glycosyltransferase 28 family. MurG subfamily.

Its subcellular location is the cell inner membrane. The catalysed reaction is di-trans,octa-cis-undecaprenyl diphospho-N-acetyl-alpha-D-muramoyl-L-alanyl-D-glutamyl-meso-2,6-diaminopimeloyl-D-alanyl-D-alanine + UDP-N-acetyl-alpha-D-glucosamine = di-trans,octa-cis-undecaprenyl diphospho-[N-acetyl-alpha-D-glucosaminyl-(1-&gt;4)]-N-acetyl-alpha-D-muramoyl-L-alanyl-D-glutamyl-meso-2,6-diaminopimeloyl-D-alanyl-D-alanine + UDP + H(+). It functions in the pathway cell wall biogenesis; peptidoglycan biosynthesis. In terms of biological role, cell wall formation. Catalyzes the transfer of a GlcNAc subunit on undecaprenyl-pyrophosphoryl-MurNAc-pentapeptide (lipid intermediate I) to form undecaprenyl-pyrophosphoryl-MurNAc-(pentapeptide)GlcNAc (lipid intermediate II). This chain is UDP-N-acetylglucosamine--N-acetylmuramyl-(pentapeptide) pyrophosphoryl-undecaprenol N-acetylglucosamine transferase, found in Cytophaga hutchinsonii (strain ATCC 33406 / DSM 1761 / CIP 103989 / NBRC 15051 / NCIMB 9469 / D465).